Here is a 372-residue protein sequence, read N- to C-terminus: uncharacterized protein (372 aa).

An N-terminal signal peptide occupies residues 1-33 (MVRRALRLAAGTASLAAGTWLLRALHGTPAALG).

The protein to K.pneumoniae RomA.

This is an uncharacterized protein from Mycobacterium bovis (strain ATCC BAA-935 / AF2122/97).